The sequence spans 168 residues: Cyclin-dependent kinase 4 inhibitor C (168 aa).

ANK repeat units follow at residues 4 to 33 (PWGN…NVNA), 37 to 65 (FGRT…NPDL), 69 to 98 (TGFA…DVNI), and 102 to 132 (EGNL…NVGH).

Belongs to the CDKN2 cyclin-dependent kinase inhibitor family. As to quaternary structure, heterodimer of p18 with CDK6. In terms of tissue distribution, highest levels found in skeletal muscle. Also found in pancreas and heart.

In terms of biological role, interacts strongly with CDK6, weakly with CDK4. Inhibits cell growth and proliferation with a correlated dependence on endogenous retinoblastoma protein RB. The protein is Cyclin-dependent kinase 4 inhibitor C (CDKN2C) of Homo sapiens (Human).